A 137-amino-acid chain; its full sequence is Large ribosomal subunit protein uL16c (137 aa).

Belongs to the universal ribosomal protein uL16 family. Part of the 50S ribosomal subunit.

The protein resides in the plastid. Its subcellular location is the chloroplast. This is Large ribosomal subunit protein uL16c from Hordeum vulgare (Barley).